Consider the following 543-residue polypeptide: Pectate disaccharide-lyase (543 aa).

The protein belongs to the polysaccharide lyase 2 family. The cofactor is Cu cation. Mn(2+) is required as a cofactor. Requires Ni(2+) as cofactor.

The protein resides in the cytoplasm. It catalyses the reaction [(1-&gt;4)-alpha-D-galacturonosyl](n) = 4-(4-deoxy-alpha-D-galact-4-enuronosyl)-D-galacturonate + [(1-&gt;4)-alpha-D-galacturonosyl](n-2). It functions in the pathway glycan metabolism; pectin degradation. Catalyzes the formation of unsaturated digalacturonates from polygalacturonate or short oligogalacturonates. The chain is Pectate disaccharide-lyase (pelW) from Dickeya dadantii (strain 3937) (Erwinia chrysanthemi (strain 3937)).